The primary structure comprises 407 residues: Digeranylgeranylglycerophospholipid reductase (407 aa).

FAD is bound by residues A15, E34, C45, A46, G48, R99, A123, D281, G293, and I294.

Belongs to the geranylgeranyl reductase family. DGGGPL reductase subfamily. It depends on FAD as a cofactor.

It carries out the reaction a 2,3-bis-O-phytanyl-sn-glycerol 1-phospholipid + 8 oxidized 2[4Fe-4S]-[ferredoxin] = a 2,3-bis-O-(geranylgeranyl)-sn-glycerol 1-phospholipid + 8 reduced 2[4Fe-4S]-[ferredoxin] + 16 H(+). It catalyses the reaction 2,3-bis-O-(phytanyl)-sn-glycerol 1-phosphate + 8 oxidized 2[4Fe-4S]-[ferredoxin] = 2,3-bis-O-(geranylgeranyl)-sn-glycerol 1-phosphate + 8 reduced 2[4Fe-4S]-[ferredoxin] + 16 H(+). The enzyme catalyses a 2,3-bis-O-phytanyl-sn-glycerol 1-phospholipid + 8 A = a 2,3-bis-O-(geranylgeranyl)-sn-glycerol 1-phospholipid + 8 AH2. The catalysed reaction is CDP-2,3-bis-O-(geranylgeranyl)-sn-glycerol + 8 AH2 = CDP-2,3-bis-O-(phytanyl)-sn-glycerol + 8 A. It carries out the reaction archaetidylserine + 8 AH2 = 2,3-bis-O-phytanyl-sn-glycero-3-phospho-L-serine + 8 A. Its pathway is membrane lipid metabolism; glycerophospholipid metabolism. Functionally, is involved in the reduction of 2,3-digeranylgeranylglycerophospholipids (unsaturated archaeols) into 2,3-diphytanylglycerophospholipids (saturated archaeols) in the biosynthesis of archaeal membrane lipids. Catalyzes the formation of archaetidic acid (2,3-di-O-phytanyl-sn-glyceryl phosphate) from 2,3-di-O-geranylgeranylglyceryl phosphate (DGGGP) via the hydrogenation of each double bond of the isoprenoid chains. Requires the adjacently encoded ferredoxin MA_1485 as the electron donor. Is also probably able to reduce double bonds of geranyl groups in CDP-2,3-bis-O-(geranylgeranyl)-sn-glycerol and archaetidylserine, thus acting at various stages in the biosynthesis of archaeal membrane lipids. The chain is Digeranylgeranylglycerophospholipid reductase from Methanosarcina acetivorans (strain ATCC 35395 / DSM 2834 / JCM 12185 / C2A).